The following is a 182-amino-acid chain: Heat shock protein beta-2 (182 aa).

Positions 55-163 (RAGEGARAGA…DTEVNEVYIS (109 aa)) constitute a sHSP domain.

This sequence belongs to the small heat shock protein (HSP20) family. As to quaternary structure, interacts with DMPK; may enhance its kinase activity.

The protein localises to the cytoplasm. Its subcellular location is the nucleus. In terms of biological role, may regulate the kinase DMPK. The chain is Heat shock protein beta-2 (Hspb2) from Mus musculus (Mouse).